We begin with the raw amino-acid sequence, 163 residues long: MNPRRKKRLTIILAISAGLAAVIGLVLYALSQNIDLFYTPSELVEGKGPDKIKPEEGQRLRIGGLVVPGSVLRDQQSLKVAFKLVDNGGHLVTVEFDGILPDLFREGQGIVAQGTLKNATTVEAFEVLAKHDENYMPPEVADATNGMHFKPEYTEAQLKGAKQ.

The Cytoplasmic segment spans residues 1–8 (MNPRRKKR). A helical; Signal-anchor for type II membrane protein membrane pass occupies residues 9–29 (LTIILAISAGLAAVIGLVLYA). The Periplasmic portion of the chain corresponds to 30-163 (LSQNIDLFYT…TEAQLKGAKQ (134 aa)). Positions 131 and 135 each coordinate heme.

The protein belongs to the CcmE/CycJ family.

The protein localises to the cell inner membrane. Functionally, heme chaperone required for the biogenesis of c-type cytochromes. Transiently binds heme delivered by CcmC and transfers the heme to apo-cytochromes in a process facilitated by CcmF and CcmH. In Aeromonas salmonicida (strain A449), this protein is Cytochrome c-type biogenesis protein CcmE.